We begin with the raw amino-acid sequence, 202 residues long: Recombination protein RecR (202 aa).

The C4-type zinc-finger motif lies at 61–76 (CARCNSFTEDDICATC). A Toprim domain is found at 84–179 (SVLCVVETPA…KVTRLARGVP (96 aa)).

It belongs to the RecR family.

May play a role in DNA repair. It seems to be involved in an RecBC-independent recombinational process of DNA repair. It may act with RecF and RecO. This is Recombination protein RecR from Bordetella petrii (strain ATCC BAA-461 / DSM 12804 / CCUG 43448).